The sequence spans 192 residues: Nucleoside triphosphate pyrophosphatase (192 aa).

D73 acts as the Proton acceptor in catalysis.

The protein belongs to the Maf family. A divalent metal cation serves as cofactor.

The protein localises to the cytoplasm. The enzyme catalyses a ribonucleoside 5'-triphosphate + H2O = a ribonucleoside 5'-phosphate + diphosphate + H(+). It carries out the reaction a 2'-deoxyribonucleoside 5'-triphosphate + H2O = a 2'-deoxyribonucleoside 5'-phosphate + diphosphate + H(+). In terms of biological role, nucleoside triphosphate pyrophosphatase. May have a dual role in cell division arrest and in preventing the incorporation of modified nucleotides into cellular nucleic acids. This chain is Nucleoside triphosphate pyrophosphatase, found in Ehrlichia ruminantium (strain Welgevonden).